A 334-amino-acid chain; its full sequence is Formamidase (334 aa).

The 247-residue stretch at 14–260 folds into the CN hydrolase domain; that stretch reads FLVAAIQFPV…WEIVTGEIYP (247 aa). The active-site Proton acceptor is glutamate 60. The Proton donor role is filled by lysine 133. The active-site Nucleophile is the cysteine 166.

This sequence belongs to the carbon-nitrogen hydrolase superfamily. Aliphatic amidase family.

It catalyses the reaction formamide + H2O = formate + NH4(+). In terms of biological role, is an aliphatic amidase with a restricted substrate specificity, as it only hydrolyzes formamide. The polypeptide is Formamidase (Helicobacter pylori (strain P12)).